A 366-amino-acid chain; its full sequence is Phenylalanine--tRNA ligase alpha subunit (366 aa).

Residue Glu-264 coordinates Mg(2+).

Belongs to the class-II aminoacyl-tRNA synthetase family. Phe-tRNA synthetase alpha subunit type 1 subfamily. Tetramer of two alpha and two beta subunits. It depends on Mg(2+) as a cofactor.

Its subcellular location is the cytoplasm. It catalyses the reaction tRNA(Phe) + L-phenylalanine + ATP = L-phenylalanyl-tRNA(Phe) + AMP + diphosphate + H(+). In Zymomonas mobilis subsp. mobilis (strain ATCC 31821 / ZM4 / CP4), this protein is Phenylalanine--tRNA ligase alpha subunit.